We begin with the raw amino-acid sequence, 610 residues long: Elongation factor 4 (610 aa).

The tr-type G domain maps to 11-193; sequence EKIRNFSIIA…QIVEKVPAPT (183 aa). Residues 23–28 and 140–143 each bind GTP; these read DHGKST and NKID.

This sequence belongs to the TRAFAC class translation factor GTPase superfamily. Classic translation factor GTPase family. LepA subfamily.

Its subcellular location is the cell membrane. It catalyses the reaction GTP + H2O = GDP + phosphate + H(+). In terms of biological role, required for accurate and efficient protein synthesis under certain stress conditions. May act as a fidelity factor of the translation reaction, by catalyzing a one-codon backward translocation of tRNAs on improperly translocated ribosomes. Back-translocation proceeds from a post-translocation (POST) complex to a pre-translocation (PRE) complex, thus giving elongation factor G a second chance to translocate the tRNAs correctly. Binds to ribosomes in a GTP-dependent manner. In Streptococcus agalactiae serotype Ia (strain ATCC 27591 / A909 / CDC SS700), this protein is Elongation factor 4.